A 137-amino-acid chain; its full sequence is Large ribosomal subunit protein uL16 (137 aa).

Belongs to the universal ribosomal protein uL16 family. In terms of assembly, part of the 50S ribosomal subunit.

Functionally, binds 23S rRNA and is also seen to make contacts with the A and possibly P site tRNAs. In Pseudomonas paraeruginosa (strain DSM 24068 / PA7) (Pseudomonas aeruginosa (strain PA7)), this protein is Large ribosomal subunit protein uL16.